Reading from the N-terminus, the 469-residue chain is Probable periplasmic serine endoprotease DegP-like (469 aa).

Positions 1–25 (MKVCQKYTAVLLVWLSAVVSMRAGA) are cleaved as a signal peptide. Catalysis depends on charge relay system residues histidine 108, aspartate 138, and serine 211. Substrate-binding positions include 209–211 (GNS) and 266–270 (LGVLI). 2 PDZ domains span residues 255 to 346 (LKDT…VRRG) and 352 to 457 (AVEI…IRQG).

This sequence belongs to the peptidase S1C family.

It is found in the periplasm. The enzyme catalyses Acts on substrates that are at least partially unfolded. The cleavage site P1 residue is normally between a pair of hydrophobic residues, such as Val-|-Val.. In terms of biological role, might be efficient in the degradation of transiently denatured and unfolded proteins which accumulate in the periplasm following stress conditions. In Hahella chejuensis (strain KCTC 2396), this protein is Probable periplasmic serine endoprotease DegP-like (mucD).